Reading from the N-terminus, the 218-residue chain is Superoxide dismutase [Mn], mitochondrial (218 aa).

Residues 1 to 21 constitute a mitochondrion transit peptide; sequence MLRFLSKNSVAAIRNVSIARG. Residues His-50 and His-96 each coordinate Mn(2+). Phosphoserine is present on Ser-129. Residues Asp-181 and His-185 each coordinate Mn(2+).

It belongs to the iron/manganese superoxide dismutase family. In terms of assembly, homodimer. Requires Mn(2+) as cofactor.

It localises to the mitochondrion matrix. The catalysed reaction is 2 superoxide + 2 H(+) = H2O2 + O2. Functionally, destroys superoxide anion radicals which are normally produced within the cells and which are toxic to biological systems. The protein is Superoxide dismutase [Mn], mitochondrial (sod2) of Schizosaccharomyces pombe (strain 972 / ATCC 24843) (Fission yeast).